Here is a 132-residue protein sequence, read N- to C-terminus: MVEAFCATWKLADSHNFDEYMKALGVGFAMRQVGNVTKPTVIISSEGDKVVIRTQSTFKNTEISFKLGEEFDETTPDDRNCKSVVTLDGDKLVHVQKWDGKETNFVREIKDGRMVMTLTFGDVVAVRHYEKA.

V2 bears the N-acetylvaline mark. Residue 127 to 129 (RHY) coordinates a fatty acid.

The protein belongs to the calycin superfamily. Fatty-acid binding protein (FABP) family.

The protein localises to the cytoplasm. In terms of biological role, FABPs are thought to play a role in the intracellular transport of long-chain fatty acids and their acyl-CoA esters. The sequence is that of Fatty acid-binding protein, brain (FABP7) from Gallus gallus (Chicken).